The following is a 177-amino-acid chain: MNSQIRQNFHQECEAAINRQVNMELYASYVYLSMSYYFDRDDVALKNFAKYFLHQSHEEREHAEKLMKMQNQRGGRLFLQDIKKPERDEWANGLEALECSLQLEKNVNQSILELHKLSTDHNDPHLCDFLESHYLDEQVKSMKELGDHITNLRRMGAPSNGLAEYLFDKHTLGEDHE.

The region spanning 7 to 156 is the Ferritin-like diiron domain; that stretch reads QNFHQECEAA…DHITNLRRMG (150 aa). Fe cation contacts are provided by Glu24, Glu59, His62, Glu104, and Gln138.

Belongs to the ferritin family. In terms of assembly, oligomer of 24 subunits. There are two types of subunits: L (light) chain and H (heavy) chain. The functional molecule is roughly spherical and contains a central cavity into which the insoluble mineral iron core is deposited.

Its subcellular location is the cytoplasm. The catalysed reaction is 4 Fe(2+) + O2 + 4 H(+) = 4 Fe(3+) + 2 H2O. Functionally, stores iron in a soluble, non-toxic, readily available form. Important for iron homeostasis. Has ferroxidase activity. Iron is taken up in the ferrous form and deposited as ferric hydroxides after oxidation. This Xenopus laevis (African clawed frog) protein is Ferritin heavy chain, oocyte isoform.